The chain runs to 239 residues: Ribosomal RNA small subunit methyltransferase G (239 aa).

Residues Gly79, Phe84, 130–131 (AE), and Arg149 each bind S-adenosyl-L-methionine.

It belongs to the methyltransferase superfamily. RNA methyltransferase RsmG family.

The protein localises to the cytoplasm. In terms of biological role, specifically methylates the N7 position of a guanine in 16S rRNA. The chain is Ribosomal RNA small subunit methyltransferase G from Pelotomaculum thermopropionicum (strain DSM 13744 / JCM 10971 / SI).